A 642-amino-acid polypeptide reads, in one-letter code: Threonine--tRNA ligase (642 aa).

Residues 1 to 61 (MPVIRFCDGS…TEDSSISFIS (61 aa)) form the TGS domain. A catalytic region spans residues 243 to 534 (DHRKIGKLLN…LIEEFSGKLP (292 aa)). The Zn(2+) site is built by Cys334, His385, and His511.

This sequence belongs to the class-II aminoacyl-tRNA synthetase family. Homodimer. Requires Zn(2+) as cofactor.

It localises to the cytoplasm. It carries out the reaction tRNA(Thr) + L-threonine + ATP = L-threonyl-tRNA(Thr) + AMP + diphosphate + H(+). Functionally, catalyzes the attachment of threonine to tRNA(Thr) in a two-step reaction: L-threonine is first activated by ATP to form Thr-AMP and then transferred to the acceptor end of tRNA(Thr). Also edits incorrectly charged L-seryl-tRNA(Thr). This is Threonine--tRNA ligase from Buchnera aphidicola subsp. Schizaphis graminum (strain Sg).